The primary structure comprises 302 residues: Endochitinase 2 (302 aa).

A Chitin-binding type-1 domain is found at 1-42 (EQCGRQAGGALCPGGLCCSQFGWCGSTADYCTVPGCQSQCSG). 7 cysteine pairs are disulfide-bonded: cysteine 3/cysteine 18, cysteine 12/cysteine 24, cysteine 17/cysteine 31, cysteine 36/cysteine 40, cysteine 73/cysteine 136, cysteine 148/cysteine 156, and cysteine 255/cysteine 287. Glutamate 117 serves as the catalytic Proton donor. A propeptide spans 296–302 (GVSVDSM) (removed in mature form).

The protein belongs to the glycosyl hydrolase 19 family. Chitinase class I subfamily.

The enzyme catalyses Random endo-hydrolysis of N-acetyl-beta-D-glucosaminide (1-&gt;4)-beta-linkages in chitin and chitodextrins.. Defense against chitin-containing fungal pathogens. The protein is Endochitinase 2 of Gossypium hirsutum (Upland cotton).